Here is a 346-residue protein sequence, read N- to C-terminus: Holliday junction branch migration complex subunit RuvB (346 aa).

The large ATPase domain (RuvB-L) stretch occupies residues 1–182 (MSEPARLISP…FGIPVRLTFY (182 aa)). Residues Leu21, Arg22, Gly63, Lys66, Thr67, Thr68, 129-131 (EDY), Arg172, Tyr182, and Arg219 each bind ATP. Position 67 (Thr67) interacts with Mg(2+). The tract at residues 183-253 (TVEELELIVR…IADEALTRLL (71 aa)) is small ATPAse domain (RuvB-S). The tract at residues 256-346 (NVGFDQLDKR…AQFRLFQEDD (91 aa)) is head domain (RuvB-H). Positions 292, 311, and 316 each coordinate DNA.

Belongs to the RuvB family. Homohexamer. Forms an RuvA(8)-RuvB(12)-Holliday junction (HJ) complex. HJ DNA is sandwiched between 2 RuvA tetramers; dsDNA enters through RuvA and exits via RuvB. An RuvB hexamer assembles on each DNA strand where it exits the tetramer. Each RuvB hexamer is contacted by two RuvA subunits (via domain III) on 2 adjacent RuvB subunits; this complex drives branch migration. In the full resolvosome a probable DNA-RuvA(4)-RuvB(12)-RuvC(2) complex forms which resolves the HJ.

It is found in the cytoplasm. The enzyme catalyses ATP + H2O = ADP + phosphate + H(+). Its function is as follows. The RuvA-RuvB-RuvC complex processes Holliday junction (HJ) DNA during genetic recombination and DNA repair, while the RuvA-RuvB complex plays an important role in the rescue of blocked DNA replication forks via replication fork reversal (RFR). RuvA specifically binds to HJ cruciform DNA, conferring on it an open structure. The RuvB hexamer acts as an ATP-dependent pump, pulling dsDNA into and through the RuvAB complex. RuvB forms 2 homohexamers on either side of HJ DNA bound by 1 or 2 RuvA tetramers; 4 subunits per hexamer contact DNA at a time. Coordinated motions by a converter formed by DNA-disengaged RuvB subunits stimulates ATP hydrolysis and nucleotide exchange. Immobilization of the converter enables RuvB to convert the ATP-contained energy into a lever motion, pulling 2 nucleotides of DNA out of the RuvA tetramer per ATP hydrolyzed, thus driving DNA branch migration. The RuvB motors rotate together with the DNA substrate, which together with the progressing nucleotide cycle form the mechanistic basis for DNA recombination by continuous HJ branch migration. Branch migration allows RuvC to scan DNA until it finds its consensus sequence, where it cleaves and resolves cruciform DNA. In Rhizobium etli (strain ATCC 51251 / DSM 11541 / JCM 21823 / NBRC 15573 / CFN 42), this protein is Holliday junction branch migration complex subunit RuvB.